A 337-amino-acid chain; its full sequence is tRNA N(3)-cytidine methyltransferase METTL2 (337 aa).

S-adenosyl-L-methionine contacts are provided by tryptophan 66, tyrosine 70, glycine 140, aspartate 165, aspartate 191, and isoleucine 212.

It belongs to the methyltransferase superfamily. METL family. As to quaternary structure, monomer.

The protein resides in the cytoplasm. It carries out the reaction cytidine(32) in tRNA(Thr) + S-adenosyl-L-methionine = N(3)-methylcytidine(32) in tRNA(Thr) + S-adenosyl-L-homocysteine + H(+). It catalyses the reaction cytidine(32) in tRNA(Arg)(CCU) + S-adenosyl-L-methionine = N(3)-methylcytidine(32) in tRNA(Arg)(CCU) + S-adenosyl-L-homocysteine + H(+). Its function is as follows. S-adenosyl-L-methionine-dependent methyltransferase that mediates N(3)-methylcytidine modification of residue 32 of the tRNA anticodon loop of tRNA(Thr)(UGU) and tRNA(Arg)(CCU). N(3)-methylcytidine methylation by mettl2 requires the N6-threonylcarbamoylation of tRNA (t6A37) by the EKC/KEOPS complex as prerequisite. The polypeptide is tRNA N(3)-cytidine methyltransferase METTL2 (mettl2) (Xenopus tropicalis (Western clawed frog)).